A 316-amino-acid chain; its full sequence is Malate dehydrogenase (316 aa).

NAD(+)-binding positions include G12 to G17 and D36. Residues R85 and R91 each contribute to the substrate site. NAD(+) contacts are provided by residues N98 and V121–N123. Substrate-binding residues include N123 and R154. The Proton acceptor role is filled by H178.

It belongs to the LDH/MDH superfamily. MDH type 3 family.

It catalyses the reaction (S)-malate + NAD(+) = oxaloacetate + NADH + H(+). Functionally, catalyzes the reversible oxidation of malate to oxaloacetate. The polypeptide is Malate dehydrogenase (Wolbachia sp. subsp. Brugia malayi (strain TRS)).